Reading from the N-terminus, the 25-residue chain is XIAGSEEYGKHCFKGAVADAYLAKH.

The protein belongs to the glutamine synthetase family. As to quaternary structure, homohexamer.

The protein resides in the plastid. The protein localises to the chloroplast. It catalyses the reaction L-glutamate + NH4(+) + ATP = L-glutamine + ADP + phosphate + H(+). Functionally, plays a key role in the nitrogen metabolism of microorganisms, animals and plants. In Emiliania huxleyi (Coccolithophore), this protein is Glutamine synthetase 2 isozyme.